Here is a 504-residue protein sequence, read N- to C-terminus: Glycerol kinase (504 aa).

Position 12 (Thr-12) interacts with ADP. ATP-binding residues include Thr-12, Thr-13, and Ser-14. Thr-12 provides a ligand contact to sn-glycerol 3-phosphate. Arg-16 serves as a coordination point for ADP. Positions 82, 83, 134, and 244 each coordinate sn-glycerol 3-phosphate. Residues Arg-82, Glu-83, Tyr-134, Asp-244, and Gln-245 each contribute to the glycerol site. Residues Thr-266 and Gly-309 each contribute to the ADP site. Residues Thr-266, Gly-309, Gln-313, and Gly-410 each contribute to the ATP site. 2 residues coordinate ADP: Gly-410 and Asn-414.

It belongs to the FGGY kinase family. Homotetramer and homodimer (in equilibrium).

The catalysed reaction is glycerol + ATP = sn-glycerol 3-phosphate + ADP + H(+). The protein operates within polyol metabolism; glycerol degradation via glycerol kinase pathway; sn-glycerol 3-phosphate from glycerol: step 1/1. With respect to regulation, activated by phosphorylation and inhibited by fructose 1,6-bisphosphate (FBP). Its function is as follows. Key enzyme in the regulation of glycerol uptake and metabolism. Catalyzes the phosphorylation of glycerol to yield sn-glycerol 3-phosphate. The chain is Glycerol kinase from Alkaliphilus oremlandii (strain OhILAs) (Clostridium oremlandii (strain OhILAs)).